A 54-amino-acid polypeptide reads, in one-letter code: Ferredoxin (54 aa).

2 consecutive 4Fe-4S ferredoxin-type domains span residues 2–25 (YVIN…IQQG) and 26–54 (SIYA…NPED). [4Fe-4S] cluster-binding residues include Cys-8, Cys-11, Cys-14, Cys-18, Cys-35, Cys-38, Cys-41, and Cys-45.

[4Fe-4S] cluster serves as cofactor.

Its function is as follows. Ferredoxins are iron-sulfur proteins that transfer electrons in a wide variety of metabolic reactions. This chain is Ferredoxin, found in Peptoniphilus asaccharolyticus (Peptostreptococcus asaccharolyticus).